Here is a 64-residue protein sequence, read N- to C-terminus: Enteric beta-defensin (64 aa).

The signal sequence occupies residues 1–26; it reads MRLHHLLLTLLFLVLSAGSGFTQGIS. Intrachain disulfides connect Cys31–Cys60, Cys38–Cys53, and Cys43–Cys61.

The protein belongs to the beta-defensin family. LAP/TAP subfamily. As to expression, inducibly expressed in enteric epithelial cells.

The protein localises to the secreted. Functionally, has antibacterial activity. In Bos taurus (Bovine), this protein is Enteric beta-defensin (EBD).